Reading from the N-terminus, the 404-residue chain is Imidazolonepropionase (404 aa).

Residues His-70 and His-72 each coordinate Fe(3+). 2 residues coordinate Zn(2+): His-70 and His-72. Residues Arg-79, Tyr-142, and His-174 each coordinate 4-imidazolone-5-propanoate. Residue Tyr-142 coordinates N-formimidoyl-L-glutamate. Position 234 (His-234) interacts with Fe(3+). His-234 is a binding site for Zn(2+). A 4-imidazolone-5-propanoate-binding site is contributed by Glu-237. Asp-308 contributes to the Fe(3+) binding site. Asp-308 contributes to the Zn(2+) binding site.

It belongs to the metallo-dependent hydrolases superfamily. HutI family. The cofactor is Zn(2+). Fe(3+) serves as cofactor.

It is found in the cytoplasm. It catalyses the reaction 4-imidazolone-5-propanoate + H2O = N-formimidoyl-L-glutamate. Its pathway is amino-acid degradation; L-histidine degradation into L-glutamate; N-formimidoyl-L-glutamate from L-histidine: step 3/3. Functionally, catalyzes the hydrolytic cleavage of the carbon-nitrogen bond in imidazolone-5-propanoate to yield N-formimidoyl-L-glutamate. It is the third step in the universal histidine degradation pathway. This is Imidazolonepropionase from Thermoplasma volcanium (strain ATCC 51530 / DSM 4299 / JCM 9571 / NBRC 15438 / GSS1).